Reading from the N-terminus, the 212-residue chain is Guanylate kinase (212 aa).

The Guanylate kinase-like domain occupies G7–R187. G14–A21 serves as a coordination point for ATP.

It belongs to the guanylate kinase family.

Its subcellular location is the cytoplasm. The catalysed reaction is GMP + ATP = GDP + ADP. In terms of biological role, essential for recycling GMP and indirectly, cGMP. This chain is Guanylate kinase, found in Onion yellows phytoplasma (strain OY-M).